A 332-amino-acid polypeptide reads, in one-letter code: MLLLAAAGLVAFVLLLYMVSPLISPKPLALPGAHVVVTGGSSGIGKCIAIECYKQGAFITLVARNEDKLLQAKKDIEKHSINDKQVVLCISVDVSQDYNQVENVIKQAQEKLGPVDMLVNCAGTSMSGKFEELEVSSFEKLMSINYLGSVYPSRAVITTMKERRVGRIVFVSSQAGQLGLFGFTAYSSSKFAIRGLAEALQMEVKPYNVYVTVAYPPDTDTPGLAEENKTKPLETRLISETTAICKPEQVAKQIVKDAIQGNFNSSIGSDGYMLSSLTCGMAPVTSITEGLQQVVTMGLFRTIALFYLGSFDNIVRRCMVQKAKPEVVDKTA.

Residues 1–25 (MLLLAAAGLVAFVLLLYMVSPLISP) form the signal peptide. The Cytoplasmic portion of the chain corresponds to 26-270 (KPLALPGAHV…GNFNSSIGSD (245 aa)). The NADPH site is built by G39, S41, S42, G43, R64, K68, and D93. The GXSXG motif lies at 39 to 43 (GGSSG). The Proton donor role is filled by S172. The active-site Proton acceptor is the Y186. NADP(+) contacts are provided by Y186 and K190. K190 functions as the Lowers pKa of active site Tyr in the catalytic mechanism. A helical membrane pass occupies residues 271–291 (GYMLSSLTCGMAPVTSITEGL). At 292 to 293 (QQ) the chain is on the lumenal side. The helical transmembrane segment at 294-314 (VVTMGLFRTIALFYLGSFDNI) threads the bilayer. The Cytoplasmic segment spans residues 315–332 (VRRCMVQKAKPEVVDKTA).

This sequence belongs to the short-chain dehydrogenases/reductases (SDR) family.

It localises to the endoplasmic reticulum membrane. It catalyses the reaction sphinganine + NADP(+) = 3-oxosphinganine + NADPH + H(+). It participates in lipid metabolism; sphingolipid metabolism. Its function is as follows. Catalyzes the reduction of 3'-oxosphinganine (3-ketodihydrosphingosine/KDS) to sphinganine (dihydrosphingosine/DHS), the second step of de novo sphingolipid biosynthesis. This chain is 3-ketodihydrosphingosine reductase (Kdsr), found in Mus musculus (Mouse).